We begin with the raw amino-acid sequence, 354 residues long: UDP-3-O-acylglucosamine N-acyltransferase (354 aa).

The active-site Proton acceptor is the His245.

This sequence belongs to the transferase hexapeptide repeat family. LpxD subfamily. Homotrimer.

It carries out the reaction a UDP-3-O-[(3R)-3-hydroxyacyl]-alpha-D-glucosamine + a (3R)-hydroxyacyl-[ACP] = a UDP-2-N,3-O-bis[(3R)-3-hydroxyacyl]-alpha-D-glucosamine + holo-[ACP] + H(+). The protein operates within bacterial outer membrane biogenesis; LPS lipid A biosynthesis. Its function is as follows. Catalyzes the N-acylation of UDP-3-O-acylglucosamine using 3-hydroxyacyl-ACP as the acyl donor. Is involved in the biosynthesis of lipid A, a phosphorylated glycolipid that anchors the lipopolysaccharide to the outer membrane of the cell. This chain is UDP-3-O-acylglucosamine N-acyltransferase, found in Anaeromyxobacter dehalogenans (strain 2CP-1 / ATCC BAA-258).